The chain runs to 427 residues: Adenylosuccinate synthetase (427 aa).

GTP-binding positions include 12–18 (GDEGKGK) and 40–42 (GHT). The active-site Proton acceptor is Asp-13. Residues Asp-13 and Gly-40 each coordinate Mg(2+). IMP contacts are provided by residues 13-16 (DEGK), 38-41 (NAGH), Thr-128, Arg-142, Gln-223, Thr-238, and Arg-302. His-41 functions as the Proton donor in the catalytic mechanism. Substrate is bound at residue 298–304 (TTTGRNR). GTP is bound by residues Arg-304, 330–332 (KLD), and 412–414 (GVG).

It belongs to the adenylosuccinate synthetase family. As to quaternary structure, homodimer. It depends on Mg(2+) as a cofactor.

The protein localises to the cytoplasm. The enzyme catalyses IMP + L-aspartate + GTP = N(6)-(1,2-dicarboxyethyl)-AMP + GDP + phosphate + 2 H(+). It participates in purine metabolism; AMP biosynthesis via de novo pathway; AMP from IMP: step 1/2. In terms of biological role, plays an important role in the de novo pathway of purine nucleotide biosynthesis. Catalyzes the first committed step in the biosynthesis of AMP from IMP. The protein is Adenylosuccinate synthetase of Thermobifida fusca (strain YX).